The following is a 224-amino-acid chain: Flagellar L-ring protein (224 aa).

Positions 1–15 (MARYLVLAVALLLAA) are cleaved as a signal peptide. C16 carries the N-palmitoyl cysteine lipid modification. C16 carries the S-diacylglycerol cysteine lipid modification.

Belongs to the FlgH family. The basal body constitutes a major portion of the flagellar organelle and consists of four rings (L,P,S, and M) mounted on a central rod.

The protein resides in the cell outer membrane. Its subcellular location is the bacterial flagellum basal body. Assembles around the rod to form the L-ring and probably protects the motor/basal body from shearing forces during rotation. The polypeptide is Flagellar L-ring protein (Shewanella baltica (strain OS185)).